Consider the following 1085-residue polypeptide: Aminopeptidase N (1085 aa).

A signal peptide (required for ER targeting and membrane association; not cleaved) is located at residues 1-30; it reads MKLTKGCAYKYIIFTVLILANILYDNKKRC. The tract at residues 1 to 200 is sufficient for targeting to the food vacuole; it reads MKLTKGCAYK…VKKNEPKIHY (200 aa). Residues 108–130 are disordered; sequence EKGDNNNNNHQNNNGNDNKKRLG. Residues 112 to 123 are compositionally biased toward low complexity; the sequence is NNNNNHQNNNGN. Positions 319, 460, 461, and 463 each coordinate a peptide. Histidine 496 is a binding site for Zn(2+). Glutamate 497 acts as the Proton acceptor in catalysis. Zn(2+) contacts are provided by histidine 500 and glutamate 519.

Belongs to the peptidase M1 family. As to quaternary structure, heterodimer of the p68 form and the p35 form which are derived from the p120 precursor. Requires Zn(2+) as cofactor. The full length protein appears to be cleaved into a 120 kDa precursor. This precursor is then proteolytically cleaved at the N-terminus generating a 96 kDa form which is further processed at the C-terminus into 68 kDa and 35 kDa forms that remain associated.

It localises to the parasitophorous vacuole membrane. The protein resides in the nucleus. It is found in the cytoplasm. The protein localises to the vacuole lumen. Inhibited by 1,10-phenanthroline, EDTA and bestatin. Inhibited by (Benzyl)Tyr-Ala (BTA). Activity is not affected by phosphoramidin, PMSF, leupeptin, iodoacetamide or pepstatin. Its function is as follows. Displays aminopeptidase activity with a broad substrate specificity. Preferentially, cleaves after Leu and Met, but also cleaves after Ala and Arg. Low activity towards Lys, Phe, Tyr, Trp, Gln, Ser and Gly and negligible activity towards Glu, Asp, Pro, Ile, Thr, Val, His and Asn. Has dipeptidase activity. Plays a role in the terminal stages of host hemoglobin digestion by cleaving the N-terminal residue of small hemoglobin-derived oligopeptides. This Plasmodium falciparum (isolate 3D7) protein is Aminopeptidase N.